A 220-amino-acid chain; its full sequence is Phosphatidylserine decarboxylase proenzyme (220 aa).

Catalysis depends on S188, which acts as the Schiff-base intermediate with substrate; via pyruvic acid. At S188 the chain carries Pyruvic acid (Ser); by autocatalysis.

Belongs to the phosphatidylserine decarboxylase family. PSD-A subfamily. Heterodimer of a large membrane-associated beta subunit and a small pyruvoyl-containing alpha subunit. It depends on pyruvate as a cofactor. In terms of processing, is synthesized initially as an inactive proenzyme. Formation of the active enzyme involves a self-maturation process in which the active site pyruvoyl group is generated from an internal serine residue via an autocatalytic post-translational modification. Two non-identical subunits are generated from the proenzyme in this reaction, and the pyruvate is formed at the N-terminus of the alpha chain, which is derived from the carboxyl end of the proenzyme. The post-translation cleavage follows an unusual pathway, termed non-hydrolytic serinolysis, in which the side chain hydroxyl group of the serine supplies its oxygen atom to form the C-terminus of the beta chain, while the remainder of the serine residue undergoes an oxidative deamination to produce ammonia and the pyruvoyl prosthetic group on the alpha chain.

It localises to the cell membrane. It carries out the reaction a 1,2-diacyl-sn-glycero-3-phospho-L-serine + H(+) = a 1,2-diacyl-sn-glycero-3-phosphoethanolamine + CO2. The protein operates within phospholipid metabolism; phosphatidylethanolamine biosynthesis; phosphatidylethanolamine from CDP-diacylglycerol: step 2/2. Its function is as follows. Catalyzes the formation of phosphatidylethanolamine (PtdEtn) from phosphatidylserine (PtdSer). The chain is Phosphatidylserine decarboxylase proenzyme from Cytophaga hutchinsonii (strain ATCC 33406 / DSM 1761 / CIP 103989 / NBRC 15051 / NCIMB 9469 / D465).